A 148-amino-acid polypeptide reads, in one-letter code: Hemoglobin subunit beta-4 (148 aa).

Positions 3 to 148 (DWTDPERSAI…VVSALGRQYH (146 aa)) constitute a Globin domain. 2 residues coordinate heme b: His-64 and His-93.

The protein belongs to the globin family. As to quaternary structure, heterotetramer of two alpha chains and two beta chains. As to expression, red blood cells.

In terms of biological role, involved in oxygen transport from gills to the various peripheral tissues. In Oncorhynchus mykiss (Rainbow trout), this protein is Hemoglobin subunit beta-4 (hbb4).